Consider the following 342-residue polypeptide: Keratin-associated protein 29-1 (342 aa).

A run of 5 repeats spans residues C5–N9, C91–D95, C239–P243, C309–G313, and C324–T328. Residues C5–T328 form a 5 X 5 AA repeats of C-C-X(3) region.

The protein belongs to the KRTAP type 10 family.

This chain is Keratin-associated protein 29-1 (Krtap29-1), found in Mus musculus (Mouse).